The chain runs to 172 residues: DCC family protein At1g52590, chloroplastic (172 aa).

A chloroplast-targeting transit peptide spans 1–25 (MAILIPASFGRLTITSRAQVRVRVS).

This sequence belongs to the DCC thiol-disulfide oxidoreductase family.

It localises to the plastid. It is found in the chloroplast. This is DCC family protein At1g52590, chloroplastic from Arabidopsis thaliana (Mouse-ear cress).